Consider the following 147-residue polypeptide: Large ribosomal subunit protein uL16 (147 aa).

It belongs to the universal ribosomal protein uL16 family. Part of the 50S ribosomal subunit.

Functionally, binds 23S rRNA and is also seen to make contacts with the A and possibly P site tRNAs. In Clostridium tetani (strain Massachusetts / E88), this protein is Large ribosomal subunit protein uL16.